The sequence spans 67 residues: MKASELRKLSNEELKEKILELKKKLFNLRFQNKIGSISNTAEINQTKKDIARILTILRERELNKTNG.

It belongs to the universal ribosomal protein uL29 family.

This is Large ribosomal subunit protein uL29 from Sulfurihydrogenibium sp. (strain YO3AOP1).